A 473-amino-acid chain; its full sequence is Photosystem II CP43 reaction center protein (473 aa).

A propeptide spanning residues 1–14 (MKILYSLRRFYHVE) is cleaved from the precursor. Thr15 carries the N-acetylthreonine modification. The residue at position 15 (Thr15) is a Phosphothreonine. The next 5 membrane-spanning stretches (helical) occupy residues 69-93 (LFEVAHFVPEKPMYEQGLILLPHLA), 134-155 (LLGPETLEESFPFFGYVWKDRN), 178-200 (KALYFGGVYDTWAPGGGDVRKIT), 255-275 (KPFAWARRAFVWSGEAYLSYS), and 291-312 (WFNNTAYSSEFYGPTGPEASQA). Glu367 is a binding site for [CaMn4O5] cluster. The helical transmembrane segment at 447–471 (RARAAAAGFEKGIDRDLEPVLYMNP) threads the bilayer.

It belongs to the PsbB/PsbC family. PsbC subfamily. As to quaternary structure, PSII is composed of 1 copy each of membrane proteins PsbA, PsbB, PsbC, PsbD, PsbE, PsbF, PsbH, PsbI, PsbJ, PsbK, PsbL, PsbM, PsbT, PsbX, PsbY, PsbZ, Psb30/Ycf12, at least 3 peripheral proteins of the oxygen-evolving complex and a large number of cofactors. It forms dimeric complexes. Binds multiple chlorophylls and provides some of the ligands for the Ca-4Mn-5O cluster of the oxygen-evolving complex. It may also provide a ligand for a Cl- that is required for oxygen evolution. PSII binds additional chlorophylls, carotenoids and specific lipids. is required as a cofactor. Phosphorylated on threonine residue(s); phosphorylation increases with increasing light levels.

It is found in the plastid. It localises to the chloroplast thylakoid membrane. Its function is as follows. One of the components of the core complex of photosystem II (PSII). It binds chlorophyll and helps catalyze the primary light-induced photochemical processes of PSII. PSII is a light-driven water:plastoquinone oxidoreductase, using light energy to abstract electrons from H(2)O, generating O(2) and a proton gradient subsequently used for ATP formation. The protein is Photosystem II CP43 reaction center protein of Secale cereale (Rye).